The chain runs to 243 residues: Ribonuclease HII (243 aa).

One can recognise an RNase H type-2 domain in the interval 23–217 (SVIVGVDEVG…LSSECEGAPP (195 aa)). A divalent metal cation is bound by residues Asp29, Glu30, and Asp122. Residues 223–243 (LSSTGIKTPVDGRGDAVATRD) are disordered. Basic and acidic residues predominate over residues 232 to 243 (VDGRGDAVATRD).

The protein belongs to the RNase HII family. Mn(2+) serves as cofactor. Mg(2+) is required as a cofactor.

It localises to the cytoplasm. The enzyme catalyses Endonucleolytic cleavage to 5'-phosphomonoester.. Functionally, endonuclease that specifically degrades the RNA of RNA-DNA hybrids. This is Ribonuclease HII from Anaplasma marginale (strain St. Maries).